The primary structure comprises 380 residues: 4-hydroxy-3-methylbut-2-en-1-yl diphosphate synthase (flavodoxin) (380 aa).

[4Fe-4S] cluster-binding residues include Cys-273, Cys-276, Cys-308, and Glu-315.

Belongs to the IspG family. [4Fe-4S] cluster is required as a cofactor.

The catalysed reaction is (2E)-4-hydroxy-3-methylbut-2-enyl diphosphate + oxidized [flavodoxin] + H2O + 2 H(+) = 2-C-methyl-D-erythritol 2,4-cyclic diphosphate + reduced [flavodoxin]. It participates in isoprenoid biosynthesis; isopentenyl diphosphate biosynthesis via DXP pathway; isopentenyl diphosphate from 1-deoxy-D-xylulose 5-phosphate: step 5/6. Converts 2C-methyl-D-erythritol 2,4-cyclodiphosphate (ME-2,4cPP) into 1-hydroxy-2-methyl-2-(E)-butenyl 4-diphosphate. The chain is 4-hydroxy-3-methylbut-2-en-1-yl diphosphate synthase (flavodoxin) from Leifsonia xyli subsp. xyli (strain CTCB07).